Reading from the N-terminus, the 201-residue chain is Snake venom metalloproteinase trimerelysin-2 (201 aa).

Gln1 is subject to Pyrrolidone carboxylic acid. The region spanning 6–201 (RYIELAIVVD…YNPQCILNAP (196 aa)) is the Peptidase M12B domain. N-linked (GlcNAc...) asparagine glycosylation occurs at Asn72. 3 cysteine pairs are disulfide-bonded: Cys117–Cys196, Cys158–Cys180, and Cys160–Cys163. A Zn(2+)-binding site is contributed by His142. Glu143 is a catalytic residue. Zn(2+) is bound by residues His146 and His152.

It belongs to the venom metalloproteinase (M12B) family. P-I subfamily. As to quaternary structure, monomer. It depends on Zn(2+) as a cofactor. In terms of tissue distribution, expressed by the venom gland.

It localises to the secreted. The catalysed reaction is Cleavage of 3-Asn-|-Gln-4, 10-His-|-Leu-11 and 14-Ala-|-Leu-15 in the insulin B chain, and the bond Z-Gly-Pro-|-Leu-Gly-Pro in a small molecule substrate of microbial collagenase.. Functionally, major venom non-hemorrhagic metalloproteinase. This is Snake venom metalloproteinase trimerelysin-2 from Protobothrops flavoviridis (Habu).